A 188-amino-acid polypeptide reads, in one-letter code: Elongation factor P (188 aa).

N6-(3,6-diaminohexanoyl)-5-hydroxylysine is present on K34.

It belongs to the elongation factor P family. In terms of processing, may be beta-lysylated on the epsilon-amino group of Lys-34 by the combined action of EpmA and EpmB, and then hydroxylated on the C5 position of the same residue by EpmC (if this protein is present). Lysylation is critical for the stimulatory effect of EF-P on peptide-bond formation. The lysylation moiety may extend toward the peptidyltransferase center and stabilize the terminal 3-CCA end of the tRNA. Hydroxylation of the C5 position on Lys-34 may allow additional potential stabilizing hydrogen-bond interactions with the P-tRNA.

It localises to the cytoplasm. It participates in protein biosynthesis; polypeptide chain elongation. Its function is as follows. Involved in peptide bond synthesis. Alleviates ribosome stalling that occurs when 3 or more consecutive Pro residues or the sequence PPG is present in a protein, possibly by augmenting the peptidyl transferase activity of the ribosome. Modification of Lys-34 is required for alleviation. The sequence is that of Elongation factor P from Photobacterium profundum (strain SS9).